We begin with the raw amino-acid sequence, 963 residues long: Collagen alpha-1(I) chain (963 aa).

The tract at residues 1–963 (GPMGPSGPRG…PGPPGPPGPP (963 aa)) is disordered. Residues 40 to 54 (NGDDGEAGKPGRPGE) are compositionally biased toward basic and acidic residues. Residue S82 is modified to Phosphoserine. Low complexity-rich tracts occupy residues 90-106 (DAGP…PGEN) and 129-142 (PAGA…TGAA). Residues 144–156 (PPGPTGPAGPPGF) are compositionally biased toward pro residues. Low complexity predominate over residues 190-229 (AGAAGPAGNPGADGQPGAKGANGAPGIAGAPGFPGARGPS). Residues 296 to 305 (GERGGPGARG) are compositionally biased toward gly residues. 6 stretches are compositionally biased toward low complexity: residues 313–337 (AGPK…PGEA), 349–375 (KGIT…QDGR), 384–403 (ARGQ…AGEP), 482–495 (PRGA…DGAK), 555–569 (SGPS…ARGA), and 582–609 (AGFA…KGDA). At S558 the chain carries Phosphoserine. Residues 611–623 (PPGPAGPTGPPGP) show a composition bias toward pro residues. Composition is skewed to low complexity over residues 638–654 (SAGP…AGRV), 683–692 (ETGPAGRPGE), and 702–726 (AGEK…QGIA). Pro residues-rich tracts occupy residues 767–777 (PPGPVGPPGIA) and 813–828 (AGPP…PGPV). The segment covering 849–863 (IGPVGARGPAGPQGP) has biased composition (low complexity). Residues 864–878 (RGDKGETGEQGDRGI) show a composition bias toward basic and acidic residues. The span at 897 to 930 (PGEQGPSGASGPAGPRGPPGSAGAPGKDGINGIP) shows a compositional bias: low complexity. Residues 948-963 (VGPPGPPGPPGPPGPP) show a composition bias toward pro residues.

The protein belongs to the fibrillar collagen family. In terms of assembly, trimers of one alpha 2(I) and two alpha 1(I) chains. In terms of processing, prolines at the third position of the tripeptide repeating unit (G-X-Y) are hydroxylated in some or all of the chains. In terms of tissue distribution, forms the fibrils of tendon, ligaments and bones. In bones, the fibrils are mineralized with calcium hydroxyapatite.

The protein localises to the secreted. Its subcellular location is the extracellular space. The protein resides in the extracellular matrix. Type I collagen is a member of group I collagen (fibrillar forming collagen). This chain is Collagen alpha-1(I) chain, found in Tapirus terrestris (Lowland tapir).